Here is a 146-residue protein sequence, read N- to C-terminus: Large ribosomal subunit protein uL13 (146 aa).

The disordered stretch occupies residues 125–146; sequence YAGPKHPHAAQQPKVYEPRPRG.

This sequence belongs to the universal ribosomal protein uL13 family. As to quaternary structure, part of the 50S ribosomal subunit.

This protein is one of the early assembly proteins of the 50S ribosomal subunit, although it is not seen to bind rRNA by itself. It is important during the early stages of 50S assembly. This is Large ribosomal subunit protein uL13 from Roseiflexus sp. (strain RS-1).